We begin with the raw amino-acid sequence, 125 residues long: Glycine cleavage system H protein 1 (125 aa).

Residues 22–103 (KAYIGITDYA…PYGSWLVAVR (82 aa)) enclose the Lipoyl-binding domain. At Lys-63 the chain carries N6-lipoyllysine.

Belongs to the GcvH family. In terms of assembly, the glycine cleavage system is composed of four proteins: P, T, L and H. (R)-lipoate is required as a cofactor.

Its function is as follows. The glycine cleavage system catalyzes the degradation of glycine. The H protein shuttles the methylamine group of glycine from the P protein to the T protein. This is Glycine cleavage system H protein 1 from Caldanaerobacter subterraneus subsp. tengcongensis (strain DSM 15242 / JCM 11007 / NBRC 100824 / MB4) (Thermoanaerobacter tengcongensis).